Here is a 169-residue protein sequence, read N- to C-terminus: Small ribosomal subunit protein uS5 (169 aa).

An S5 DRBM domain is found at 14-77 (LQEKLVAVRR…EQARKNMRKV (64 aa)).

The protein belongs to the universal ribosomal protein uS5 family. As to quaternary structure, part of the 30S ribosomal subunit. Contacts proteins S4 and S8.

Functionally, with S4 and S12 plays an important role in translational accuracy. In terms of biological role, located at the back of the 30S subunit body where it stabilizes the conformation of the head with respect to the body. The protein is Small ribosomal subunit protein uS5 of Methylococcus capsulatus (strain ATCC 33009 / NCIMB 11132 / Bath).